The sequence spans 59 residues: Temperature acclimation protein A (59 aa).

A CSD domain is found at 1–55 (FNDEKGFGFITPESGPDLFVHFRAIQGNGFKSLKEGQKVTFIAVQGQKGMQADKV).

The protein localises to the cytoplasm. Affects cell viability at low temperatures. The protein is Temperature acclimation protein A (tapA) of Pseudomonas fragi.